The chain runs to 359 residues: Dual-specificity RNA methyltransferase RlmN (359 aa).

E86 acts as the Proton acceptor in catalysis. A Radical SAM core domain is found at E105–D338. The cysteines at positions 112 and 343 are disulfide-linked. Positions 119, 123, and 126 each coordinate [4Fe-4S] cluster. S-adenosyl-L-methionine is bound by residues G169–E170, S201, S224–H226, and N300. Residue C343 is the S-methylcysteine intermediate of the active site.

It belongs to the radical SAM superfamily. RlmN family. Requires [4Fe-4S] cluster as cofactor.

The protein resides in the cytoplasm. The catalysed reaction is adenosine(2503) in 23S rRNA + 2 reduced [2Fe-2S]-[ferredoxin] + 2 S-adenosyl-L-methionine = 2-methyladenosine(2503) in 23S rRNA + 5'-deoxyadenosine + L-methionine + 2 oxidized [2Fe-2S]-[ferredoxin] + S-adenosyl-L-homocysteine. The enzyme catalyses adenosine(37) in tRNA + 2 reduced [2Fe-2S]-[ferredoxin] + 2 S-adenosyl-L-methionine = 2-methyladenosine(37) in tRNA + 5'-deoxyadenosine + L-methionine + 2 oxidized [2Fe-2S]-[ferredoxin] + S-adenosyl-L-homocysteine. Its function is as follows. Specifically methylates position 2 of adenine 2503 in 23S rRNA and position 2 of adenine 37 in tRNAs. m2A2503 modification seems to play a crucial role in the proofreading step occurring at the peptidyl transferase center and thus would serve to optimize ribosomal fidelity. This Wolinella succinogenes (strain ATCC 29543 / DSM 1740 / CCUG 13145 / JCM 31913 / LMG 7466 / NCTC 11488 / FDC 602W) (Vibrio succinogenes) protein is Dual-specificity RNA methyltransferase RlmN.